A 519-amino-acid polypeptide reads, in one-letter code: T-complex protein 1 subunit gamma (519 aa).

The protein belongs to the TCP-1 chaperonin family. Component of the T-complex protein 1 (TCP1) complex.

It localises to the cytoplasm. Molecular chaperone; assists the folding of proteins upon ATP hydrolysis. The sequence is that of T-complex protein 1 subunit gamma (CCT3) from Encephalitozoon cuniculi (strain GB-M1) (Microsporidian parasite).